The sequence spans 777 residues: Glucocorticoid receptor (777 aa).

Positions 1–14 are enriched in basic and acidic residues; sequence MDSKESLTPGKEEN. The segment at 1 to 22 is disordered; that stretch reads MDSKESLTPGKEENPSSVLTQE. The interval 1–420 is modulating; the sequence is MDSKESLTPG…TATTGPPPKL (420 aa). Thr8 carries the phosphothreonine modification. Omega-N-methylarginine is present on Arg23. 4 positions are modified to phosphoserine: Ser45, Ser113, Ser134, and Ser141. The disordered stretch occupies residues 130–182; it reads NRSTSVPENPKSSASSSVSAAPKEKEFPKTHSDVSSEQQNLKGQTGSNGGNVK. Over residues 134–150 the composition is skewed to low complexity; sequence SVPENPKSSASSSVSAA. The span at 151 to 163 shows a compositional bias: basic and acidic residues; that stretch reads PKEKEFPKTHSDV. Over residues 164–174 the composition is skewed to polar residues; that stretch reads SSEQQNLKGQT. Phosphoserine is present on residues Ser203, Ser211, and Ser226. Lys258 participates in a covalent cross-link: Glycyl lysine isopeptide (Lys-Gly) (interchain with G-Cter in SUMO2). Ser267 carries the phosphoserine modification. Residues Lys277 and Lys293 each participate in a glycyl lysine isopeptide (Lys-Gly) (interchain with G-Cter in SUMO); alternate cross-link. Glycyl lysine isopeptide (Lys-Gly) (interchain with G-Cter in SUMO2); alternate cross-links involve residues Lys277 and Lys293. Residues 394-414 show a composition bias toward low complexity; sequence SSPSMRPDVSSPPSSSSTATT. Residues 394–415 form a disordered region; that stretch reads SSPSMRPDVSSPPSSSSTATTG. A Phosphoserine modification is found at Ser404. A Glycyl lysine isopeptide (Lys-Gly) (interchain with G-Cter in ubiquitin) cross-link involves residue Lys419. 2 NR C4-type zinc fingers span residues 421–441 and 457–481; these read CLVC…CGSC and CAGR…YRKC. Positions 421-486 form a DNA-binding region, nuclear receptor; that stretch reads CLVCSDEASG…RYRKCLQAGM (66 aa). N6-acetyllysine occurs at positions 480, 492, 494, and 495. Residues 485–777 are interaction with CLOCK; sequence GMNLEARKTK…NIKKLLFHQK (293 aa). The interval 487–523 is hinge; sequence NLEARKTKKKIKGIQQATTGVSQETSENPANKTIVPA. One can recognise an NR LBD domain in the interval 524 to 758; it reads TLPQLTPTLV…FPEMLAEIIT (235 aa). The segment at 532–697 is interaction with CRY1; sequence LVSLLEVIEP…EIRMTYIKEL (166 aa). Lys703 is covalently cross-linked (Glycyl lysine isopeptide (Lys-Gly) (interchain with G-Cter in SUMO)).

This sequence belongs to the nuclear hormone receptor family. NR3 subfamily. As to quaternary structure, heteromultimeric cytoplasmic complex with HSP90AA1, HSPA1A/HSPA1B, and FKBP5 or another immunophilin such as PPID, STIP1, or the immunophilin homolog PPP5C. Upon ligand binding FKBP5 dissociates from the complex and FKBP4 takes its place, thereby linking the complex to dynein and mediating transport to the nucleus, where the complex dissociates. Probably forms a complex composed of chaperones HSP90 and HSP70, co-chaperones CDC37, PPP5C, TSC1 and client protein TSC2, CDK4, AKT, RAF1 and NR3C1; this complex does not contain co-chaperones STIP1/HOP and PTGES3/p23. Directly interacts with UNC45A. Binds to DNA as a homodimer, and as heterodimer with NR3C2 or the retinoid X receptor. Binds STAT5A and STAT5B homodimers and heterodimers. Interacts with NRIP1, POU2F1, POU2F2 and TRIM28. Interacts with several coactivator complexes, including the SMARCA4 complex, CREBBP/EP300, TADA2L (Ada complex) and p160 coactivators such as NCOA2 and NCOA6. Interaction with BAG1 inhibits transactivation. Interacts with HEXIM1 and TGFB1I1. Interacts with NCOA1. Interacts with NCOA3, SMARCA4, SMARCC1, SMARCD1, and SMARCE1. Interacts with CLOCK, CRY1 and CRY2 in a ligand-dependent fashion. Interacts with CIART. Interacts with RWDD3. Interacts with UBE2I/UBC9 and this interaction is enhanced in the presence of RWDD3. Interacts with GRIP1. Interacts with NR4A3 (via nuclear receptor DNA-binding domain), represses transcription activity of NR4A3 on the POMC promoter Nur response element (NurRE). Directly interacts with PNRC2 to attract and form a complex with UPF1 and DCP1A; the interaction leads to rapid mRNA degradation. Interacts with GSK3B. Interacts with FNIP1 and FNIP2. Interacts (via C-terminus) with HNRNPU (via C-terminus). Interacts with MCM3AP. Interacts (via domain NR LBD) with HSP90AA1 and HSP90AB1. In the absence of hormonal ligand, interacts with TACC1. Interacts (via NR LBD domain) with ZNF764 (via KRAB domain); the interaction regulates transcription factor activity of NR3C1 by directing its actions toward certain biologic pathways. Acetylation by CLOCK reduces its binding to glucocorticoid response elements and its transcriptional activity. In terms of processing, increased proteasome-mediated degradation in response to glucocorticoids. Post-translationally, phosphorylated in the absence of hormone; becomes hyperphosphorylated in the presence of glucocorticoid. The Ser-203, Ser-226 and Ser-404-phosphorylated forms are mainly cytoplasmic, and the Ser-211-phosphorylated form is nuclear. Phosphorylation at Ser-211 increases transcriptional activity. Phosphorylation at Ser-203, Ser-226 and Ser-404 decreases signaling capacity. Phosphorylation at Ser-404 may protect from glucocorticoid-induced apoptosis. Phosphorylation at Ser-203 and Ser-211 is not required in regulation of chromosome segregation. May be dephosphorylated by PPP5C, attenuates NR3C1 action. Ubiquitinated by UBR5, leading to its degradation: UBR5 specifically recognizes and binds ligand-bound NR3C1 when it is not associated with coactivators (NCOAs). In presence of NCOAs, the UBR5-degron is not accessible, preventing its ubiquitination and degradation. In terms of processing, sumoylation at Lys-277 and Lys-293 negatively regulates its transcriptional activity. Sumoylation at Lys-703 positively regulates its transcriptional activity in the presence of RWDD3. Sumoylation at Lys-277 and Lys-293 is dispensable whereas sumoylation at Lys-703 is critical for the stimulatory effect of RWDD3 on its transcriptional activity. Heat shock increases sumoylation in a RWDD3-dependent manner.

It is found in the cytoplasm. Its subcellular location is the nucleus. It localises to the mitochondrion. The protein resides in the cytoskeleton. The protein localises to the spindle. It is found in the microtubule organizing center. Its subcellular location is the centrosome. It localises to the chromosome. The protein resides in the nucleoplasm. Functionally, receptor for glucocorticoids (GC). Has a dual mode of action: as a transcription factor that binds to glucocorticoid response elements (GRE), both for nuclear and mitochondrial DNA, and as a modulator of other transcription factors. Affects inflammatory responses, cellular proliferation and differentiation in target tissues. Involved in chromatin remodeling. Plays a role in rapid mRNA degradation by binding to the 5' UTR of target mRNAs and interacting with PNRC2 in a ligand-dependent manner which recruits the RNA helicase UPF1 and the mRNA-decapping enzyme DCP1A, leading to RNA decay. Could act as a coactivator for STAT5-dependent transcription upon growth hormone (GH) stimulation and could reveal an essential role of hepatic GR in the control of body growth. Mediates glucocorticoid-induced apoptosis. Promotes accurate chromosome segregation during mitosis. May act as a tumor suppressor. May play a negative role in adipogenesis through the regulation of lipolytic and antilipogenic gene expression. This is Glucocorticoid receptor (NR3C1) from Saimiri boliviensis boliviensis (Bolivian squirrel monkey).